Consider the following 204-residue polypeptide: Somatotropin (204 aa).

The N-terminal stretch at 1 to 17 is a signal peptide; sequence MDRAILLLSVLSVGVSS. Pyrrolidone carboxylic acid is present on Q18. A Zn(2+)-binding site is contributed by H35. A disulfide bridge links C69 with C177. A Zn(2+)-binding site is contributed by E186. A disulfide bond links C194 and C202.

The protein belongs to the somatotropin/prolactin family.

It is found in the secreted. In terms of biological role, growth hormone plays an important role in growth control and is involved in the regulation of several anabolic processes. Implicated as an osmoregulatory substance important for seawater adaptation. The protein is Somatotropin (gh) of Dicentrarchus labrax (European seabass).